Consider the following 515-residue polypeptide: 2,3-bisphosphoglycerate-independent phosphoglycerate mutase 1 (515 aa).

2 residues coordinate Mn(2+): Asp14 and Ser64. The Phosphoserine intermediate role is filled by Ser64. Substrate is bound by residues His125, Arg155–Asp156, Arg187, Arg193, Arg264–Arg267, and Lys337. Residues Asp404, His408, Asp445, His446, and His464 each coordinate Mn(2+).

It belongs to the BPG-independent phosphoglycerate mutase family. The cofactor is Mn(2+).

The enzyme catalyses (2R)-2-phosphoglycerate = (2R)-3-phosphoglycerate. The protein operates within carbohydrate degradation; glycolysis; pyruvate from D-glyceraldehyde 3-phosphate: step 3/5. In terms of biological role, catalyzes the interconversion of 2-phosphoglycerate and 3-phosphoglycerate. In Methanosarcina acetivorans (strain ATCC 35395 / DSM 2834 / JCM 12185 / C2A), this protein is 2,3-bisphosphoglycerate-independent phosphoglycerate mutase 1.